The following is a 429-amino-acid chain: Cholesterol 7-desaturase nvd (429 aa).

The helical transmembrane segment at 23 to 43 (FVICLWTLAVTFIRIYWIFFV) threads the bilayer. The region spanning 98 to 201 (YGILKSSQLK…SQEVDGFIFI (104 aa)) is the Rieske domain. Residues cysteine 138, histidine 140, cysteine 158, and histidine 161 each coordinate [2Fe-2S] cluster.

This sequence belongs to the cholesterol 7-desaturase family. [2Fe-2S] cluster is required as a cofactor. Expressed predominantly in the prothoracic gland and weakly in brain and malpighian tubules.

It is found in the membrane. It catalyses the reaction cholesterol + NADPH + O2 + H(+) = 7-dehydrocholesterol + NADP(+) + 2 H2O. The catalysed reaction is cholesterol + NADH + O2 + H(+) = 7-dehydrocholesterol + NAD(+) + 2 H2O. The protein operates within steroid hormone biosynthesis; dafachronic acid biosynthesis. Functionally, catalyzes the production of 7-dehydrocholesterol (7-DHC or cholesta-5,7-dien-3beta-ol) by inserting a double bond (desaturating) at the C7-C8 single bond of cholesterol. Essential regulator of steroid biosynthesis, as this reaction is the first step in the synthesis of the steroid hormone Delta(7)-dafachronic acid. Required for insect molting, metamorphosis and body growth throughout development via the regulation of ecdysteroid biosynthesis in the prothoracic gland. In Drosophila melanogaster (Fruit fly), this protein is Cholesterol 7-desaturase nvd.